We begin with the raw amino-acid sequence, 147 residues long: UPF0178 protein Nther_1836 (147 aa).

It belongs to the UPF0178 family.

The sequence is that of UPF0178 protein Nther_1836 from Natranaerobius thermophilus (strain ATCC BAA-1301 / DSM 18059 / JW/NM-WN-LF).